A 265-amino-acid polypeptide reads, in one-letter code: Indole-3-glycerol phosphate synthase (265 aa).

This sequence belongs to the TrpC family.

It catalyses the reaction 1-(2-carboxyphenylamino)-1-deoxy-D-ribulose 5-phosphate + H(+) = (1S,2R)-1-C-(indol-3-yl)glycerol 3-phosphate + CO2 + H2O. It functions in the pathway amino-acid biosynthesis; L-tryptophan biosynthesis; L-tryptophan from chorismate: step 4/5. In Xanthomonas axonopodis pv. citri (strain 306), this protein is Indole-3-glycerol phosphate synthase.